Consider the following 145-residue polypeptide: Basic phospholipase A2 PC17 (145 aa).

The first 21 residues, 1-21 (MYPAHLLLLLAVCVSLLGASA), serve as a signal peptide directing secretion. Positions 22–27 (IPPLPL) are excised as a propeptide. Intrachain disulfides connect Cys-38–Cys-98, Cys-54–Cys-144, Cys-56–Cys-72, Cys-71–Cys-125, Cys-78–Cys-118, Cys-87–Cys-111, and Cys-105–Cys-116. Ca(2+)-binding residues include Tyr-55, Gly-57, and Gly-59. His-75 is a catalytic residue. Asp-76 contributes to the Ca(2+) binding site. Asp-119 is a catalytic residue.

It belongs to the phospholipase A2 family. Group I subfamily. D49 sub-subfamily. The cofactor is Ca(2+).

The protein localises to the secreted. The enzyme catalyses a 1,2-diacyl-sn-glycero-3-phosphocholine + H2O = a 1-acyl-sn-glycero-3-phosphocholine + a fatty acid + H(+). Functionally, PLA2 catalyzes the calcium-dependent hydrolysis of the 2-acyl groups in 3-sn-phosphoglycerides. The protein is Basic phospholipase A2 PC17 of Laticauda laticaudata (Blue-ringed sea krait).